The primary structure comprises 439 residues: Acyl-coenzyme A thioesterase 9, mitochondrial (439 aa).

A mitochondrion-targeting transit peptide spans 1-21 (MRRAALRLCALGKGQLTPGRG). 2 consecutive HotDog ACOT-type domains span residues 84 to 209 (KDSY…RDSE) and 289 to 401 (ENSK…EKEV). At Lys-103 the chain carries N6-acetyllysine.

The protein belongs to the acyl coenzyme A hydrolase family. In terms of assembly, interacts with NYAP1, NYAP2 and MYO16.

The protein resides in the mitochondrion. It localises to the mitochondrion matrix. The protein localises to the mitochondrion inner membrane. The catalysed reaction is butanoyl-CoA + H2O = butanoate + CoA + H(+). The enzyme catalyses propanoyl-CoA + H2O = propanoate + CoA + H(+). It catalyses the reaction hexadecanoyl-CoA + H2O = hexadecanoate + CoA + H(+). It carries out the reaction octanoyl-CoA + H2O = octanoate + CoA + H(+). The catalysed reaction is decanoyl-CoA + H2O = decanoate + CoA + H(+). The enzyme catalyses tetradecanoyl-CoA + H2O = tetradecanoate + CoA + H(+). It catalyses the reaction 4,8-dimethylnonanoyl-CoA + H2O = 4,8-dimethylnonanoate + CoA + H(+). It carries out the reaction 3-methylbutanoyl-CoA + H2O = 3-methylbutanoate + CoA + H(+). The catalysed reaction is 2-methylpropanoyl-CoA + H2O = 2-methylpropanoate + CoA + H(+). It functions in the pathway lipid metabolism; fatty acid metabolism. Strongly inhibited by NADH and CoA. Its function is as follows. Mitochondrial acyl-CoA thioesterase. Catalyzes the hydrolysis of acyl-CoAs into free fatty acids and coenzyme A (CoA), regulating their respective intracellular levels. Regulates both mitochondrial lipid and amino acid metabolism. In Homo sapiens (Human), this protein is Acyl-coenzyme A thioesterase 9, mitochondrial.